We begin with the raw amino-acid sequence, 187 residues long: Ribosome maturation factor RimM (187 aa).

The PRC barrel domain maps to 111–187 (KDEYYWVDLI…RILVDWQADF (77 aa)).

The protein belongs to the RimM family. Binds ribosomal protein uS19.

Its subcellular location is the cytoplasm. Its function is as follows. An accessory protein needed during the final step in the assembly of 30S ribosomal subunit, possibly for assembly of the head region. Essential for efficient processing of 16S rRNA. May be needed both before and after RbfA during the maturation of 16S rRNA. It has affinity for free ribosomal 30S subunits but not for 70S ribosomes. This is Ribosome maturation factor RimM from Albidiferax ferrireducens (strain ATCC BAA-621 / DSM 15236 / T118) (Rhodoferax ferrireducens).